Consider the following 131-residue polypeptide: Transcription antitermination protein NusB (131 aa).

The protein belongs to the NusB family.

Involved in transcription antitermination. Required for transcription of ribosomal RNA (rRNA) genes. Binds specifically to the boxA antiterminator sequence of the ribosomal RNA (rrn) operons. This Bacillus subtilis (strain 168) protein is Transcription antitermination protein NusB.